A 212-amino-acid chain; its full sequence is MSTATLVVFPPPPPVPIPTYITSLGLGYSIAIALGFLVLISTIILSSYICCRASRLRFSASAANANANASFSDRGVIVPRIIFVAEDDDLESGNVVVGGLDHSVINSYPKFHFTKDITAVVNGDGFHDGEGRETTCSICLCEYMEEEMLRMMPECKHYFHVYCLDAWLKLNGSCPVCRNSPLPTPQSTPQSTPLSEVVPLSQYAADRRRSRR.

A helical transmembrane segment spans residues 24-44; it reads LGLGYSIAIALGFLVLISTII. Residues 136–178 form an RING-type; atypical zinc finger; it reads CSICLCEYMEEEMLRMMPECKHYFHVYCLDAWLKLNGSCPVCR. Residues 182–212 are disordered; sequence LPTPQSTPQSTPLSEVVPLSQYAADRRRSRR. Low complexity predominate over residues 185–195; sequence PQSTPQSTPLS.

It belongs to the RING-type zinc finger family. ATL subfamily.

The protein localises to the membrane. The catalysed reaction is S-ubiquitinyl-[E2 ubiquitin-conjugating enzyme]-L-cysteine + [acceptor protein]-L-lysine = [E2 ubiquitin-conjugating enzyme]-L-cysteine + N(6)-ubiquitinyl-[acceptor protein]-L-lysine.. It participates in protein modification; protein ubiquitination. This chain is RING-H2 finger protein ATL68 (ATL68), found in Arabidopsis thaliana (Mouse-ear cress).